The primary structure comprises 557 residues: Dihydroxy-acid dehydratase (557 aa).

Cysteine 50 provides a ligand contact to [2Fe-2S] cluster. Aspartate 82 provides a ligand contact to Mg(2+). Cysteine 123 lines the [2Fe-2S] cluster pocket. Residues aspartate 124 and lysine 125 each coordinate Mg(2+). Position 125 is an N6-carboxylysine (lysine 125). Cysteine 195 contacts [2Fe-2S] cluster. Residue glutamate 447 participates in Mg(2+) binding. Catalysis depends on serine 473, which acts as the Proton acceptor.

It belongs to the IlvD/Edd family. Homodimer. It depends on [2Fe-2S] cluster as a cofactor. Mg(2+) is required as a cofactor.

The catalysed reaction is (2R)-2,3-dihydroxy-3-methylbutanoate = 3-methyl-2-oxobutanoate + H2O. It carries out the reaction (2R,3R)-2,3-dihydroxy-3-methylpentanoate = (S)-3-methyl-2-oxopentanoate + H2O. It participates in amino-acid biosynthesis; L-isoleucine biosynthesis; L-isoleucine from 2-oxobutanoate: step 3/4. Its pathway is amino-acid biosynthesis; L-valine biosynthesis; L-valine from pyruvate: step 3/4. Its function is as follows. Functions in the biosynthesis of branched-chain amino acids. Catalyzes the dehydration of (2R,3R)-2,3-dihydroxy-3-methylpentanoate (2,3-dihydroxy-3-methylvalerate) into 2-oxo-3-methylpentanoate (2-oxo-3-methylvalerate) and of (2R)-2,3-dihydroxy-3-methylbutanoate (2,3-dihydroxyisovalerate) into 2-oxo-3-methylbutanoate (2-oxoisovalerate), the penultimate precursor to L-isoleucine and L-valine, respectively. This chain is Dihydroxy-acid dehydratase, found in Nitrosomonas eutropha (strain DSM 101675 / C91 / Nm57).